We begin with the raw amino-acid sequence, 385 residues long: Initiation-specific alpha-1,6-mannosyltransferase (385 aa).

Residues 1–15 (MLQLREPQMVHKHLK) lie on the Cytoplasmic side of the membrane. The chain crosses the membrane as a helical; Signal-anchor for type II membrane protein span at residues 16-36 (LAVLGIVVIFTTYFIISSLSS). The Lumenal portion of the chain corresponds to 37–385 (PTSTHKTEYN…KDDGMPEMEQ (349 aa)). The short motif at 189-191 (DID) is the DXD motif element.

This sequence belongs to the glycosyltransferase 32 family. Mn(2+) serves as cofactor.

The protein resides in the endoplasmic reticulum membrane. It localises to the golgi apparatus membrane. It carries out the reaction Transfers an alpha-D-mannosyl residue from GDP-mannose into lipid-linked oligosaccharide, forming an alpha-(1-&gt;6)-D-mannosyl-D-mannose linkage.. In terms of biological role, mannosyltransferase involved in outer chain elongation of asparagine-linked oligosaccharides of the type Man(9)GlcNAc(2). Adds the first alpha-1,6-mannose to the Man(8)GlcNAc(2) and Man(9)GlcNAc(2), but not Man(5)GlcNAc(2), endoplasmic reticulum intermediates. Represents the first enzymatic event required for synthesis of outer chain mannose linkages on yeast secretory proteins. N-glycan outer chain epitopes play a crucial role in the host-fungal interaction, virulence, and host immune response such as interleukin synthesis or phagocytosis by neutrophils. The protein is Initiation-specific alpha-1,6-mannosyltransferase of Candida albicans (strain SC5314 / ATCC MYA-2876) (Yeast).